Consider the following 176-residue polypeptide: Cytochrome b (176 aa).

3 helical membrane passes run phenylalanine 33–methionine 53, tryptophan 77–valine 98, and tryptophan 113–leucine 133. Heme b contacts are provided by histidine 83 and histidine 97.

This sequence belongs to the cytochrome b family. In terms of assembly, the cytochrome bc1 complex contains 11 subunits: 3 respiratory subunits (MT-CYB, CYC1 and UQCRFS1), 2 core proteins (UQCRC1 and UQCRC2) and 6 low-molecular weight proteins (UQCRH/QCR6, UQCRB/QCR7, UQCRQ/QCR8, UQCR10/QCR9, UQCR11/QCR10 and a cleavage product of UQCRFS1). This cytochrome bc1 complex then forms a dimer. The cofactor is heme b.

The protein localises to the mitochondrion inner membrane. Component of the ubiquinol-cytochrome c reductase complex (complex III or cytochrome b-c1 complex) that is part of the mitochondrial respiratory chain. The b-c1 complex mediates electron transfer from ubiquinol to cytochrome c. Contributes to the generation of a proton gradient across the mitochondrial membrane that is then used for ATP synthesis. This Myotis leibii (Eastern small-footed myotis) protein is Cytochrome b (MT-CYB).